A 341-amino-acid chain; its full sequence is N-acetyl-gamma-glutamyl-phosphate reductase (341 aa).

Cys146 is an active-site residue.

This sequence belongs to the NAGSA dehydrogenase family. Type 1 subfamily.

Its subcellular location is the cytoplasm. The catalysed reaction is N-acetyl-L-glutamate 5-semialdehyde + phosphate + NADP(+) = N-acetyl-L-glutamyl 5-phosphate + NADPH + H(+). It functions in the pathway amino-acid biosynthesis; L-arginine biosynthesis; N(2)-acetyl-L-ornithine from L-glutamate: step 3/4. In terms of biological role, catalyzes the NADPH-dependent reduction of N-acetyl-5-glutamyl phosphate to yield N-acetyl-L-glutamate 5-semialdehyde. The protein is N-acetyl-gamma-glutamyl-phosphate reductase of Limosilactobacillus fermentum (strain NBRC 3956 / LMG 18251) (Lactobacillus fermentum).